The following is a 310-amino-acid chain: Nucleotide-binding protein Mmc1_3333 (310 aa).

19–26 (GLSGAGKS) lines the ATP pocket.

This sequence belongs to the RapZ-like family.

In terms of biological role, displays ATPase and GTPase activities. This Magnetococcus marinus (strain ATCC BAA-1437 / JCM 17883 / MC-1) protein is Nucleotide-binding protein Mmc1_3333.